Consider the following 207-residue polypeptide: Ribosomal RNA large subunit methyltransferase E (207 aa).

Gly-60, Trp-62, Asp-80, Asp-96, and Asp-121 together coordinate S-adenosyl-L-methionine. Catalysis depends on Lys-161, which acts as the Proton acceptor.

The protein belongs to the class I-like SAM-binding methyltransferase superfamily. RNA methyltransferase RlmE family.

Its subcellular location is the cytoplasm. It catalyses the reaction uridine(2552) in 23S rRNA + S-adenosyl-L-methionine = 2'-O-methyluridine(2552) in 23S rRNA + S-adenosyl-L-homocysteine + H(+). Specifically methylates the uridine in position 2552 of 23S rRNA at the 2'-O position of the ribose in the fully assembled 50S ribosomal subunit. The chain is Ribosomal RNA large subunit methyltransferase E from Pseudomonas paraeruginosa (strain DSM 24068 / PA7) (Pseudomonas aeruginosa (strain PA7)).